Consider the following 156-residue polypeptide: Eosinophil cationic-type ribonuclease 3 (156 aa).

The N-terminal stretch at 1–25 is a signal peptide; sequence MGPKLLESRLCLLLLLRLVLMLASC. Residue His38 is the Proton acceptor of the active site. N-linked (GlcNAc...) asparagine glycosylation is present at Asn41. 4 disulfides stabilise this stretch: Cys47/Cys106, Cys61/Cys119, Cys79/Cys134, and Cys86/Cys94. 62-66 contacts substrate; sequence KGLNT. N-linked (GlcNAc...) asparagine glycosylation is found at Asn89, Asn96, and Asn107. Catalysis depends on His151, which acts as the Proton donor.

It belongs to the pancreatic ribonuclease family.

The protein is Eosinophil cationic-type ribonuclease 3 (Ear3) of Mus musculus (Mouse).